The primary structure comprises 333 residues: DNA-directed RNA polymerase subunit alpha (333 aa).

Residues 1–233 are alpha N-terminal domain (alpha-NTD); the sequence is MVREKVRVST…DLFIPFLHAE (233 aa). An alpha C-terminal domain (alpha-CTD) region spans residues 266–333; the sequence is KKEIAFKSIF…DILEIEKHFP (68 aa).

This sequence belongs to the RNA polymerase alpha chain family. As to quaternary structure, in plastids the minimal PEP RNA polymerase catalytic core is composed of four subunits: alpha, beta, beta', and beta''. When a (nuclear-encoded) sigma factor is associated with the core the holoenzyme is formed, which can initiate transcription.

The protein resides in the plastid. It is found in the chloroplast. The catalysed reaction is RNA(n) + a ribonucleoside 5'-triphosphate = RNA(n+1) + diphosphate. In terms of biological role, DNA-dependent RNA polymerase catalyzes the transcription of DNA into RNA using the four ribonucleoside triphosphates as substrates. This chain is DNA-directed RNA polymerase subunit alpha, found in Lotus japonicus (Lotus corniculatus var. japonicus).